The chain runs to 375 residues: Succinyl-diaminopimelate desuccinylase (375 aa).

Histidine 66 is a Zn(2+) binding site. Residue aspartate 68 is part of the active site. A Zn(2+)-binding site is contributed by aspartate 99. The active-site Proton acceptor is the glutamate 133. The Zn(2+) site is built by glutamate 134, glutamate 162, and histidine 348.

This sequence belongs to the peptidase M20A family. DapE subfamily. Homodimer. Requires Zn(2+) as cofactor. It depends on Co(2+) as a cofactor.

It carries out the reaction N-succinyl-(2S,6S)-2,6-diaminopimelate + H2O = (2S,6S)-2,6-diaminopimelate + succinate. It participates in amino-acid biosynthesis; L-lysine biosynthesis via DAP pathway; LL-2,6-diaminopimelate from (S)-tetrahydrodipicolinate (succinylase route): step 3/3. Its function is as follows. Catalyzes the hydrolysis of N-succinyl-L,L-diaminopimelic acid (SDAP), forming succinate and LL-2,6-diaminopimelate (DAP), an intermediate involved in the bacterial biosynthesis of lysine and meso-diaminopimelic acid, an essential component of bacterial cell walls. The polypeptide is Succinyl-diaminopimelate desuccinylase (Salmonella typhi).